Consider the following 194-residue polypeptide: HTH-type transcriptional regulator BetI (194 aa).

The region spanning 8–68 (EIRRAQLIDA…ATMRHVLRDL (61 aa)) is the HTH tetR-type domain. Residues 31–50 (TLASVAQRANISTGIVSHYF) constitute a DNA-binding region (H-T-H motif).

It functions in the pathway amine and polyamine biosynthesis; betaine biosynthesis via choline pathway [regulation]. Functionally, repressor involved in the biosynthesis of the osmoprotectant glycine betaine. It represses transcription of the choline transporter BetT and the genes of BetAB involved in the synthesis of glycine betaine. This Burkholderia cenocepacia (strain ATCC BAA-245 / DSM 16553 / LMG 16656 / NCTC 13227 / J2315 / CF5610) (Burkholderia cepacia (strain J2315)) protein is HTH-type transcriptional regulator BetI.